Reading from the N-terminus, the 407-residue chain is Pleckstrin homology-like domain family A member 1 (407 aa).

Composition is skewed to basic and acidic residues over residues 1 to 11 and 54 to 63; these read MRRTPAAERLS and RSAEDGREQP. The tract at residues 1 to 67 is disordered; it reads MRRTPAAERL…DGREQPAHGS (67 aa). The 36-residue stretch at 149-184 folds into the PH domain; sequence SGCKALKEGVLEKRSDGLLQLWKKKCCILTEEGLLL. Disordered regions lie at residues 188–224 and 296–407; these read KQVQ…EPPA and QQHL…SNSA. Low complexity-rich tracts occupy residues 189–204 and 297–319; these read QVQH…QPGQ and QHLV…QPQI. Residues 312–348 are 15 X 2 AA repeats of P-Q; sequence PQPQQPQIQPQPQPQIQPQPQPQPQPQPQPQQQPQPQ. Over residues 320 to 344 the composition is skewed to pro residues; it reads QPQPQPQIQPQPQPQPQPQPQPQQQ. The interval 354–381 is 11 X 2 AA repeats of P-H; that stretch reads PHPHPHLYPHPHPHAHSHPHPHPHPHPH. Residues 354–384 are compositionally biased toward basic residues; it reads PHPHPHLYPHPHPHAHSHPHPHPHPHPHQLQ. Positions 385–395 are enriched in low complexity; sequence HAHQPLHSQPQ.

Interacts with RPL14, EIF3S7 and PABPC4.

It localises to the cytoplasm. Its subcellular location is the cytoplasmic vesicle. It is found in the nucleus. The protein localises to the nucleolus. In terms of biological role, seems to be involved in regulation of apoptosis. May be involved in detachment-mediated programmed cell death. May mediate apoptosis during neuronal development. May be involved in regulation of anti-apoptotic effects of IGF1. May be involved in translational regulation. The chain is Pleckstrin homology-like domain family A member 1 (Phlda1) from Rattus norvegicus (Rat).